We begin with the raw amino-acid sequence, 417 residues long: Autophagy-related protein 18 (417 aa).

4 WD repeats span residues 1 to 36 (MSMN…KSYE), 76 to 114 (ELTF…LVYT), 185 to 225 (AHKS…KLYQ), and 230 to 269 (SMPS…GLSK). The L/FRRG motif motif lies at 226–230 (FRRGS). Positions 267 to 300 (LSKTSSPSRKLESSRGSGDESAVESASSEMSSRK) are disordered. The segment covering 285–296 (DESAVESASSEM) has biased composition (low complexity). WD repeat units lie at residues 300–346 (KHNG…AWIK) and 355–395 (GGSG…GGEG).

Belongs to the WD repeat PROPPIN family. As to quaternary structure, component of the PI(3,5)P2 regulatory complex.

Its subcellular location is the preautophagosomal structure membrane. The protein localises to the vacuole membrane. It is found in the endosome membrane. Functionally, the PI(3,5)P2 regulatory complex regulates both the synthesis and turnover of phosphatidylinositol 3,5-bisphosphate (PtdIns(3,5)P2). Necessary for proper vacuole morphology. Plays an important role in osmotically-induced vacuole fragmentation. Required for cytoplasm to vacuole transport (Cvt) vesicle formation, pexophagy and starvation-induced autophagy. Involved in correct ATG9 trafficking to the pre-autophagosomal structure. Might also be involved in premeiotic DNA replication. The protein is Autophagy-related protein 18 (ATG18) of Coccidioides immitis (strain RS) (Valley fever fungus).